The primary structure comprises 201 residues: Akirin-2 (201 aa).

2 positions are modified to phosphoserine: serine 18 and serine 21. A Nuclear localization signal motif is present at residues 23–28 (KRRRCA). A Phosphoserine modification is found at serine 55. The short motif at 198–201 (SYVS) is the SYVS motif element.

The protein belongs to the akirin family. As to quaternary structure, homodimer. Interacts with IPO9; the interaction is direct. Associates with 20S and 26S proteasomes. Interacts with SMARCD1; promoting SWI/SNF complex recruitment. Interacts with NFKBIZ. Interacts with YWHAB. Post-translationally, polyubiquitinated. Polyubiquitination is dependent of UBR5 that extends pre-ubiquitinated AKIRIN2.

Its subcellular location is the nucleus. The protein localises to the cytoplasm. The protein resides in the membrane. Molecular adapter that acts as a bridge between a variety of multiprotein complexes, and which is involved in embryonic development, immunity, myogenesis and brain development. Plays a key role in nuclear protein degradation by promoting import of proteasomes into the nucleus: directly binds to fully assembled 20S proteasomes at one end and to nuclear import receptor IPO9 at the other end, bridging them together and mediating the import of pre-assembled proteasome complexes through the nuclear pore. Involved in innate immunity by regulating the production of interleukin-6 (IL6) downstream of Toll-like receptor (TLR): acts by bridging the NF-kappa-B inhibitor NFKBIZ and the SWI/SNF complex, leading to promote induction of IL6. Also involved in adaptive immunity by promoting B-cell activation. Involved in brain development: required for the survival and proliferation of cerebral cortical progenitor cells. Involved in myogenesis: required for skeletal muscle formation and skeletal development, possibly by regulating expression of muscle differentiation factors. Also plays a role in facilitating interdigital tissue regression during limb development. The sequence is that of Akirin-2 from Mus musculus (Mouse).